The chain runs to 86 residues: YcgL domain-containing protein IL1825 (86 aa).

The YcgL domain maps to 1–85 (MLCDVYRSSK…KREELQVNVN (85 aa)).

The protein is YcgL domain-containing protein IL1825 of Idiomarina loihiensis (strain ATCC BAA-735 / DSM 15497 / L2-TR).